A 355-amino-acid polypeptide reads, in one-letter code: MTKEKNVILTARDIVVEFDVRDKVLTAIRGVSLELVEGEVLALVGESGSGKSVLTKTFTGMLEENGRIAQGSIDYRGQDLTALSSHKDWEQIRGAKIATIFQDPMTSLDPIKTIGSQITEVIVKHQGKTAKEAKELAIDYMNKVGIPDADRRFNEYPFQYSGGMRQRIVIAIALACRPDVLICDEPTTALDVTIQAQIIDLLKSLQNEYHFTTIFITHDLGVVASIADKVAVMYAGEIVEYGTVEEVFYDPRHPYTWSLLSSLPQLADDKGDLYSIPGTPPSLYTDLKGDAFALRSDYAMQIDFEQKAPQFSVSETHWAKTWLLHEDAPKVEKPAVIANLHDKIREKMGFAHLAD.

An ABC transporter domain is found at 9–260 (LTARDIVVEF…PRHPYTWSLL (252 aa)). 45–52 (GESGSGKS) provides a ligand contact to ATP.

It belongs to the ABC transporter superfamily.

It is found in the cell membrane. Part of the binding-protein-dependent transport system for oligopeptides. Probably responsible for energy coupling to the transport system. The polypeptide is Oligopeptide transport ATP-binding protein AmiE (amiE) (Streptococcus pneumoniae serotype 4 (strain ATCC BAA-334 / TIGR4)).